The chain runs to 177 residues: Superoxide dismutase [Cu-Zn] 1 (177 aa).

The signal sequence occupies residues 1–20 (MKYTILSLVAGALISCSAMA). H69, H71, and H94 together coordinate Cu cation. Cysteines 76 and 172 form a disulfide. Zn(2+)-binding residues include H94, H103, H112, and D115. Cu cation is bound at residue H150.

The protein belongs to the Cu-Zn superoxide dismutase family. In terms of assembly, monomer. It depends on Cu cation as a cofactor. Requires Zn(2+) as cofactor.

Its subcellular location is the periplasm. The enzyme catalyses 2 superoxide + 2 H(+) = H2O2 + O2. Destroys radicals which are normally produced within the cells and which are toxic to biological systems. This Salmonella typhimurium (strain 4/74) protein is Superoxide dismutase [Cu-Zn] 1 (sodC1).